The chain runs to 368 residues: MRADTRDFRALFLGDAPLLDTRAPVEFAKGAFPGAVNLPLMSDAERHKVGLCYKQQGQDAAIALGHRLVSGAVKAERVAAWAAFAQAHPEGYLYCFRGGLRSQISQAWLREEAGIAYPRVIGGYKAMRGFLLETIEQAIAECGFVVLGGMTGTGKTDVLRQLDHGLDLEAHAHHRGSSFGKHATGQPAQIDFDNRLAIDILKKRAAGCRQFVVEDESQAIGSCSLPFGLYQGMQRYPVVWLEDTQPARVQRILRDYVIDLCGEFTALHGEQDGFGLYAARLRQSLDNIARRLGGERHRRLAALMDEALARQAGDGSVDAHRAWIEPLLTEYYDPMYAYQRQAKAARIVFTGDHQEVLDYLRGPGRALP.

Residues 12 to 136 (FLGDAPLLDT…MRGFLLETIE (125 aa)) enclose the Rhodanese domain. The active-site S-selanylcysteine intermediate is the cysteine 95.

The protein belongs to the SelU family. Monomer.

It catalyses the reaction 5-methylaminomethyl-2-thiouridine(34) in tRNA + selenophosphate + (2E)-geranyl diphosphate + H2O + H(+) = 5-methylaminomethyl-2-selenouridine(34) in tRNA + (2E)-thiogeraniol + phosphate + diphosphate. The catalysed reaction is 5-methylaminomethyl-2-thiouridine(34) in tRNA + (2E)-geranyl diphosphate = 5-methylaminomethyl-S-(2E)-geranyl-thiouridine(34) in tRNA + diphosphate. It carries out the reaction 5-methylaminomethyl-S-(2E)-geranyl-thiouridine(34) in tRNA + selenophosphate + H(+) = 5-methylaminomethyl-2-(Se-phospho)selenouridine(34) in tRNA + (2E)-thiogeraniol. The enzyme catalyses 5-methylaminomethyl-2-(Se-phospho)selenouridine(34) in tRNA + H2O = 5-methylaminomethyl-2-selenouridine(34) in tRNA + phosphate. Its function is as follows. Involved in the post-transcriptional modification of the uridine at the wobble position (U34) of tRNA(Lys), tRNA(Glu) and tRNA(Gln). Catalyzes the conversion of 2-thiouridine (S2U-RNA) to 2-selenouridine (Se2U-RNA). Acts in a two-step process involving geranylation of 2-thiouridine (S2U) to S-geranyl-2-thiouridine (geS2U) and subsequent selenation of the latter derivative to 2-selenouridine (Se2U) in the tRNA chain. The sequence is that of tRNA 2-selenouridine synthase from Bordetella bronchiseptica (strain ATCC BAA-588 / NCTC 13252 / RB50) (Alcaligenes bronchisepticus).